Reading from the N-terminus, the 257-residue chain is Capsid protein (257 aa).

Belongs to the geminiviridae capsid protein family.

The protein resides in the virion. Encapsidates the viral DNA into characteristic twinned ('geminate') particles. Plays a role in protection of the genome from degradation, virus acquisition and transmission by insect vectors, infectivity, and systemic movement. This is Capsid protein from Capsicum annuum (Capsicum pepper).